Here is a 967-residue protein sequence, read N- to C-terminus: Sarcosine oxidase subunit alpha (967 aa).

The NAD(+) site is built by A141, D160, E161, R162, S168, V207, A420, and T427. Residues T694 and E786 each coordinate (6R)-5,10-methylene-5,6,7,8-tetrahydrofolate.

The protein belongs to the GcvT family. In terms of assembly, heterotetramer composed of subunits alpha (SoxA), beta (SoxB), gamma (SoxG) and delta (SoxD). NAD(+) serves as cofactor.

It is found in the cytoplasm. The enzyme catalyses sarcosine + (6S)-5,6,7,8-tetrahydrofolate + O2 = (6R)-5,10-methylene-5,6,7,8-tetrahydrofolate + glycine + H2O2. It catalyses the reaction sarcosine + O2 + H2O = formaldehyde + glycine + H2O2. Functionally, in the presence of tetrahydrofolate, catalyzes the oxidative demethylation of sarcosine to yield glycine, 5,10-methylenetetrahydrofolate and hydrogen peroxide. In the absence of tetrahydrofolate, catalyzes the oxidative demethylation of sarcosine to yield glycine, formaldehyde and hydrogen peroxide. In Corynebacterium sp. (strain P-1), this protein is Sarcosine oxidase subunit alpha.